The sequence spans 313 residues: Putative glycosyltransferase ORF313 (313 aa).

Belongs to the glycosyltransferase group 1 family. Glycosyltransferase 4 subfamily.

The polypeptide is Putative glycosyltransferase ORF313 (Acidianus hospitalis (AFV-1)).